Consider the following 136-residue polypeptide: Large ribosomal subunit protein uL22 (136 aa).

This sequence belongs to the universal ribosomal protein uL22 family. Part of the 50S ribosomal subunit.

This protein binds specifically to 23S rRNA; its binding is stimulated by other ribosomal proteins, e.g. L4, L17, and L20. It is important during the early stages of 50S assembly. It makes multiple contacts with different domains of the 23S rRNA in the assembled 50S subunit and ribosome. Functionally, the globular domain of the protein is located near the polypeptide exit tunnel on the outside of the subunit, while an extended beta-hairpin is found that lines the wall of the exit tunnel in the center of the 70S ribosome. The chain is Large ribosomal subunit protein uL22 from Bacteroides thetaiotaomicron (strain ATCC 29148 / DSM 2079 / JCM 5827 / CCUG 10774 / NCTC 10582 / VPI-5482 / E50).